The chain runs to 546 residues: G1/S-specific cyclin CLN1 (546 aa).

Positions S224–M265 are disordered.

This sequence belongs to the cyclin family.

Its function is as follows. Essential for the control of the cell cycle at the G1/S (start) transition. Interacts with the CDC28 protein kinase to form MPF. The protein is G1/S-specific cyclin CLN1 (CLN1) of Saccharomyces cerevisiae (strain ATCC 204508 / S288c) (Baker's yeast).